We begin with the raw amino-acid sequence, 224 residues long: DNA mismatch repair protein MutH (224 aa).

The protein belongs to the MutH family.

Its subcellular location is the cytoplasm. Sequence-specific endonuclease that cleaves unmethylated GATC sequences. It is involved in DNA mismatch repair. The chain is DNA mismatch repair protein MutH from Shewanella amazonensis (strain ATCC BAA-1098 / SB2B).